Reading from the N-terminus, the 156-residue chain is Small ribosomal subunit protein uS7 (156 aa).

The protein belongs to the universal ribosomal protein uS7 family. In terms of assembly, part of the 30S ribosomal subunit. Contacts proteins S9 and S11.

Its function is as follows. One of the primary rRNA binding proteins, it binds directly to 16S rRNA where it nucleates assembly of the head domain of the 30S subunit. Is located at the subunit interface close to the decoding center, probably blocks exit of the E-site tRNA. The sequence is that of Small ribosomal subunit protein uS7 from Rhizobium meliloti (strain 1021) (Ensifer meliloti).